The sequence spans 102 residues: NADH-quinone oxidoreductase subunit K (102 aa).

The next 3 membrane-spanning stretches (helical) occupy residues 5–25 (LGHY…GIFL), 30–50 (IIVI…NLVA), and 62–82 (VFAL…LAVL).

This sequence belongs to the complex I subunit 4L family. As to quaternary structure, NDH-1 is composed of 14 different subunits. Subunits NuoA, H, J, K, L, M, N constitute the membrane sector of the complex.

The protein resides in the cell inner membrane. It carries out the reaction a quinone + NADH + 5 H(+)(in) = a quinol + NAD(+) + 4 H(+)(out). NDH-1 shuttles electrons from NADH, via FMN and iron-sulfur (Fe-S) centers, to quinones in the respiratory chain. The immediate electron acceptor for the enzyme in this species is believed to be ubiquinone. Couples the redox reaction to proton translocation (for every two electrons transferred, four hydrogen ions are translocated across the cytoplasmic membrane), and thus conserves the redox energy in a proton gradient. The chain is NADH-quinone oxidoreductase subunit K from Bradyrhizobium sp. (strain BTAi1 / ATCC BAA-1182).